The chain runs to 584 residues: MALWERGAGGAAEAGEDATEEPERGLPLLPWDRFSAWLHCVCVVGFDLELGQAVEVIYPPHSKLTDKEKTNICYLSFPDSNSGCLGDTQFCFRFRRSSGRKASLCCFLDHLDRDLPVYLKKDPAYYYGYVYFRQVRDKSLKRGYFQKSLVLISKLPYIHLFRTVLKQIAPEYFEKSEAFLEAVCSDVDRWPPPVPGEVLHLPIMGVVMKLRIPTYRDKPGTTPVVQNMHQADAQISMTLPTVHEVDLFRCFCPVFFHIQMLWELVLLGEPLVVMAPSPAESSETVLALVSCISPLKYCSDFRPYFTIHDSEFKEYTTRTQAPPSVILGVTNPFFAKTLQHWPHIIRIGDMKLPGDVPKQVKVKKLKNLKTLDSKPGVYTSYKPYLDKDEEIVKQLQKGVQQKRPTEAQSAILRRYFLELTESFIIPLERYVASLMPLQKCISPWKSPPQLRHFSQDDFMKTLEKAGPQLTSGLKGDWIGLYRHFLKSPNFDGWFRSRQKEMTQNLEALHLEALCNENLVFWSQKHTEVETVDLVLKLKNKLLQADREHLPVKTDTLKKLQTHIRDIILALPDDLQDILLKTGTA.

Positions 1 to 23 (MALWERGAGGAAEAGEDATEEPE) are disordered. The uDENN domain occupies 39-218 (HCVCVVGFDL…KLRIPTYRDK (180 aa)). In terms of domain architecture, cDENN spans 244-369 (EVDLFRCFCP…VKVKKLKNLK (126 aa)). The 134-residue stretch at 371–504 (LDSKPGVYTS…RSRQKEMTQN (134 aa)) folds into the dDENN domain.

Belongs to the DENND6 family.

The protein localises to the recycling endosome. It localises to the cytoplasm. Its function is as follows. Guanine nucleotide exchange factor (GEF) for RAB14. The polypeptide is Protein DENND6A (DENND6A) (Gallus gallus (Chicken)).